We begin with the raw amino-acid sequence, 544 residues long: Chaperonin GroEL (544 aa).

ATP contacts are provided by residues 29 to 32, Lys50, 86 to 90, Gly415, and Asp495; these read TLGP and DGTTT.

It belongs to the chaperonin (HSP60) family. Forms a cylinder of 14 subunits composed of two heptameric rings stacked back-to-back. Interacts with the co-chaperonin GroES.

It localises to the cytoplasm. The enzyme catalyses ATP + H2O + a folded polypeptide = ADP + phosphate + an unfolded polypeptide.. Its function is as follows. Together with its co-chaperonin GroES, plays an essential role in assisting protein folding. The GroEL-GroES system forms a nano-cage that allows encapsulation of the non-native substrate proteins and provides a physical environment optimized to promote and accelerate protein folding. In Tannerella forsythia (Bacteroides forsythus), this protein is Chaperonin GroEL.